Here is a 344-residue protein sequence, read N- to C-terminus: tRNA N6-adenosine threonylcarbamoyltransferase (344 aa).

Fe cation-binding residues include His111 and His115. Substrate is bound by residues 134 to 138 (LVSGG), Asp167, Gly180, and Asn272. Asp300 serves as a coordination point for Fe cation.

It belongs to the KAE1 / TsaD family. The cofactor is Fe(2+).

Its subcellular location is the cytoplasm. It carries out the reaction L-threonylcarbamoyladenylate + adenosine(37) in tRNA = N(6)-L-threonylcarbamoyladenosine(37) in tRNA + AMP + H(+). Functionally, required for the formation of a threonylcarbamoyl group on adenosine at position 37 (t(6)A37) in tRNAs that read codons beginning with adenine. Is involved in the transfer of the threonylcarbamoyl moiety of threonylcarbamoyl-AMP (TC-AMP) to the N6 group of A37, together with TsaE and TsaB. TsaD likely plays a direct catalytic role in this reaction. The sequence is that of tRNA N6-adenosine threonylcarbamoyltransferase from Idiomarina loihiensis (strain ATCC BAA-735 / DSM 15497 / L2-TR).